A 324-amino-acid polypeptide reads, in one-letter code: uncharacterized protein (324 aa).

It belongs to the mgp1/MG371 family.

This is an uncharacterized protein from Mycoplasma genitalium (strain ATCC 33530 / DSM 19775 / NCTC 10195 / G37) (Mycoplasmoides genitalium).